Consider the following 358-residue polypeptide: Phosphoribosyl pyrophosphate synthase-associated protein 2 (358 aa).

It belongs to the ribose-phosphate pyrophosphokinase family.

In terms of biological role, seems to play a negative regulatory role in 5-phosphoribose 1-diphosphate synthesis. The chain is Phosphoribosyl pyrophosphate synthase-associated protein 2 (prpsap2) from Xenopus tropicalis (Western clawed frog).